The sequence spans 1295 residues: MEIYRGAPALSAFKTTKQLEQLKQAGIPVKELYAEYQHFVDLHNELSDEHRSVLVQLLKYGPEMPAHEPQGALVLVTPRIGTISPWASKATDIAHNCGLKSIHRVERGVAFYLQGDLSAEELKQAALLLHDRMTESVLYDMNDAQQLFRSQEPQPLSSVDILAGGREALAQANISLGLALADDEIDYLVENFRKLDRNPNDIELYMFAQANSEHCRHKIFNADWTIDGAEQPKSLFKMIKNTFETTPDYVLSAYKDNAAVMEGHEAGRFYPQPDSMSYGYSHEPVHILMKVETHNHPTAISPYPGAATGSGGEIRDEGATGVGSKPKAGLVGFSVSNLNIPGFKQPWEENYGKPARIVSALDIMLEGPLGGAAFNNEFGRPALTGYFRTYEQTVDSHNGRETRGYHKPIMIAGGLGNIREAHVQKGDIPVGAKLVVLGGPAMNIGLGGGAASSMASGESTEDLDFASVQRENPEMERRCQEVIDRCWQLGADNPIAFIHDVGAGGLSNAMPELVSDGGRGGRFELREIPNDEPGMTPLEIWCNESQERYVIAIAPENLARFEALCERERAEYAVIGEATEELTILLNDAKFSNQPIDLSLDVLLGKPPKMHRDVARLQTEGTPLHLEAADLNDAADRLLRLPAIAEKTFLITIGDRSVTGLVARDQMVGPWQIPVADVAVTASSYDSYHGEAMAMGERTPLALLNFGASARMAVAESLTNIAAADIGDLKRIKLSANWMCAAGHPGEDAGLYEAVKAVGEELCPELGITIPVGKDSMSMKTQWQQDGEDKAVTAPMSLVITAFGRVNDIRSTLTPQLRTDKGQSHLVLIDLGKGQNRLGGSALAQVYQQLGQHTPDLDDTETFKAFFNTTQQLVTEGRLLAYHDRSDGGLFTTVAEMAFAGNCGAKVALDELGEDNLATLFNEELGAVIQVSDEQYQKVMDAYKTAGLGDCVKRIGEPTHEDAIVFTRDEQNVLAQSRTHWRTVWAETTHHMQRLRDNPVCADEEFRLKQRADNPGLLADLTFDPSEDIAAPYIAKGVAPKVAILREQGVNSHYEMAAAFDRAGFEAVDVHMSDILAGRVSLEDMQALAACGGFSYGDVLGAGEGWAKSILFNDRAREQFEAFFKRNDTLALGVCNGCQMLSTLKQLIPGTEHWPRFVTNRSERFEARFSLVEVQESKSIFLGDMAGSRMPIAVSHGEGRAEFANPQQQSQLEQNSQVALRYIDNWGEVAEQYPANPNGSPKGITAVTSDDGRVTAMMPHPERVFRTVANSWHPDEWGEDSPWMRMFRNARKHLG.

ATP contacts are provided by residues 305–316 (GAATGSGGEIRD), 384–386 (TGY), and Ala676. The Mg(2+) site is built by Asp677, Glu716, Asn720, and Asp884. Residue Ser886 participates in ATP binding. In terms of domain architecture, Glutamine amidotransferase type-1 spans 1042-1295 (VAILREQGVN…MFRNARKHLG (254 aa)). The active-site Nucleophile is the Cys1135. Catalysis depends on residues His1260 and Glu1262.

In the N-terminal section; belongs to the FGAMS family. As to quaternary structure, monomer.

Its subcellular location is the cytoplasm. It catalyses the reaction N(2)-formyl-N(1)-(5-phospho-beta-D-ribosyl)glycinamide + L-glutamine + ATP + H2O = 2-formamido-N(1)-(5-O-phospho-beta-D-ribosyl)acetamidine + L-glutamate + ADP + phosphate + H(+). The protein operates within purine metabolism; IMP biosynthesis via de novo pathway; 5-amino-1-(5-phospho-D-ribosyl)imidazole from N(2)-formyl-N(1)-(5-phospho-D-ribosyl)glycinamide: step 1/2. In terms of biological role, phosphoribosylformylglycinamidine synthase involved in the purines biosynthetic pathway. Catalyzes the ATP-dependent conversion of formylglycinamide ribonucleotide (FGAR) and glutamine to yield formylglycinamidine ribonucleotide (FGAM) and glutamate. This chain is Phosphoribosylformylglycinamidine synthase, found in Idiomarina loihiensis (strain ATCC BAA-735 / DSM 15497 / L2-TR).